The sequence spans 211 residues: uncharacterized protein (211 aa).

An N-terminal signal peptide occupies residues 1–20 (MSRVQISTVLAIDTATPAVT).

To M.leprae ML0378.

This is an uncharacterized protein from Mycobacterium tuberculosis (strain CDC 1551 / Oshkosh).